Here is a 212-residue protein sequence, read N- to C-terminus: Photosynthetic NDH subunit of subcomplex B 5, chloroplastic (212 aa).

The transit peptide at 1 to 48 (MATVTILSPKSIPKVTDSKFGARVSDQIVNVVKCGKSGRRLKLAKLVS) directs the protein to the chloroplast. 2 helical membrane passes run 115–135 (FQGL…YFDA) and 136–156 (PGEY…IIEM).

As to quaternary structure, part of the chloroplast NDH complex, composed of a mixture of chloroplast and nucleus encoded subunits. Component of the NDH subcomplex B, at least composed of PnsB1, PnsB2, PnsB3, PnsB4 and PnsB5.

It is found in the plastid. It localises to the chloroplast membrane. NDH shuttles electrons from NAD(P)H:plastoquinone, via FMN and iron-sulfur (Fe-S) centers, to quinones in the photosynthetic chain and possibly in a chloroplast respiratory chain. The immediate electron acceptor for the enzyme in this species is believed to be plastoquinone. Couples the redox reaction to proton translocation, and thus conserves the redox energy in a proton gradient. This Arabidopsis thaliana (Mouse-ear cress) protein is Photosynthetic NDH subunit of subcomplex B 5, chloroplastic.